Consider the following 591-residue polypeptide: L-fucose isomerase (591 aa).

Catalysis depends on proton acceptor residues glutamate 337 and aspartate 361. Positions 337, 361, and 528 each coordinate Mn(2+).

This sequence belongs to the L-fucose isomerase family. In terms of assembly, homohexamer. Requires Mn(2+) as cofactor.

It is found in the cytoplasm. The enzyme catalyses L-fucose = L-fuculose. It participates in carbohydrate degradation; L-fucose degradation; L-lactaldehyde and glycerone phosphate from L-fucose: step 1/3. Converts the aldose L-fucose into the corresponding ketose L-fuculose. In Salmonella schwarzengrund (strain CVM19633), this protein is L-fucose isomerase.